The primary structure comprises 422 residues: Dihydroorotase (422 aa).

Zn(2+) is bound by residues His-53 and His-55. Substrate is bound by residues 55–57 (HFR) and Asn-87. Residues Glu-138, His-172, His-223, and Asp-291 each coordinate Zn(2+). The active site involves Asp-291. His-295 is a binding site for substrate.

This sequence belongs to the metallo-dependent hydrolases superfamily. DHOase family. Class I DHOase subfamily. Zn(2+) serves as cofactor.

It carries out the reaction (S)-dihydroorotate + H2O = N-carbamoyl-L-aspartate + H(+). It functions in the pathway pyrimidine metabolism; UMP biosynthesis via de novo pathway; (S)-dihydroorotate from bicarbonate: step 3/3. In terms of biological role, catalyzes the reversible cyclization of carbamoyl aspartate to dihydroorotate. This Halobacterium salinarum (strain ATCC 700922 / JCM 11081 / NRC-1) (Halobacterium halobium) protein is Dihydroorotase.